The following is a 207-amino-acid chain: LexA repressor (207 aa).

Residues 28–48 (VREIGEAVGLASSSTVHGHLA) constitute a DNA-binding region (H-T-H motif). Residues Ser129 and Lys167 each act as for autocatalytic cleavage activity in the active site.

Belongs to the peptidase S24 family. As to quaternary structure, homodimer.

The enzyme catalyses Hydrolysis of Ala-|-Gly bond in repressor LexA.. In terms of biological role, represses a number of genes involved in the response to DNA damage (SOS response), including recA and lexA. In the presence of single-stranded DNA, RecA interacts with LexA causing an autocatalytic cleavage which disrupts the DNA-binding part of LexA, leading to derepression of the SOS regulon and eventually DNA repair. This chain is LexA repressor, found in Bacillus licheniformis (strain ATCC 14580 / DSM 13 / JCM 2505 / CCUG 7422 / NBRC 12200 / NCIMB 9375 / NCTC 10341 / NRRL NRS-1264 / Gibson 46).